The chain runs to 384 residues: G protein-coupled receptor 88 (384 aa).

Topologically, residues 1-35 are extracellular; the sequence is MTNSSSTSTSTTTGGSLLLLCEEEESWAGRRIPVS. A glycan (N-linked (GlcNAc...) asparagine) is linked at asparagine 3. The helical transmembrane segment at 36–56 threads the bilayer; sequence LLYSGLAIGGTLANGMVIYLV. At 57–73 the chain is on the cytoplasmic side; that stretch reads SSFRKLQTTSNAFIVNG. The chain crosses the membrane as a helical span at residues 74-94; the sequence is CAADLSVCALWMPQEAVLGLL. Topologically, residues 95 to 116 are extracellular; the sequence is PSGSAEPPGDWDGGGGSYRLLR. Residues 117 to 136 form a helical membrane-spanning segment; that stretch reads GGLLGLGLTVSLLSHCLVAL. Over 137-158 the chain is Cytoplasmic; sequence NRYLLITRAPATYQVLYQRRHT. A helical membrane pass occupies residues 159–179; that stretch reads VGMLALSWALALGLVLLLPPW. The Extracellular segment spans residues 180 to 195; the sequence is APKPGAEPPQVHYPAL. Residues 196-216 form a helical membrane-spanning segment; it reads LAAGALLAQTALLLHCYLGIV. Over 217–285 the chain is Cytoplasmic; the sequence is RRVRVSVKRV…RAQRRLSGLS (69 aa). A helical transmembrane segment spans residues 286–306; it reads VLLLCCVFLLATQPLVWVSLA. Residues 307 to 310 are Extracellular-facing; sequence SGFS. A helical membrane pass occupies residues 311–331; it reads LPVPWGVQAASWLLCCALSAL. Topologically, residues 332 to 384 are cytoplasmic; sequence NPLLYTWRNEEFRRSVRSVLPGVGDAAAAAAAATAVPAMSQAQLGTRAAGQHW.

It belongs to the G-protein coupled receptor 1 family. Expressed predominantly in the striatum.

The protein localises to the cell membrane. It is found in the cell projection. The protein resides in the cilium membrane. Its subcellular location is the cytoplasm. It localises to the nucleus. In terms of biological role, orphan G protein-coupled receptor implicated in a large repertoire of behavioral responses that engage motor activities, spatial learning, and emotional processing. May play a role in the regulation of cognitive and motor function. Couples with the heterotrimeric G protein complex of the G(i) subfamily, consisting of GNAI1, GNB1 and GNG2, thereby acting through a G(i)-mediated pathway. Plays a role in the attenuation of D1 dopamine receptor (D1R)-mediated cAMP response in ciliated cells. In on-ciliated cells, involved in the inhibition of the beta-2 adrenergic receptor (B2AR) response. This Mus musculus (Mouse) protein is G protein-coupled receptor 88 (Gpr88).